Here is a 156-residue protein sequence, read N- to C-terminus: Ribosomal RNA large subunit methyltransferase H (156 aa).

S-adenosyl-L-methionine-binding positions include L73, G104, and 123–128 (LSALTL).

This sequence belongs to the RNA methyltransferase RlmH family. In terms of assembly, homodimer.

The protein localises to the cytoplasm. It catalyses the reaction pseudouridine(1915) in 23S rRNA + S-adenosyl-L-methionine = N(3)-methylpseudouridine(1915) in 23S rRNA + S-adenosyl-L-homocysteine + H(+). Specifically methylates the pseudouridine at position 1915 (m3Psi1915) in 23S rRNA. This chain is Ribosomal RNA large subunit methyltransferase H, found in Shewanella pealeana (strain ATCC 700345 / ANG-SQ1).